Consider the following 78-residue polypeptide: DNA-directed RNA polymerase subunit omega (78 aa).

It belongs to the RNA polymerase subunit omega family. In cyanobacteria the RNAP catalytic core is composed of 2 alpha, 1 beta, 1 beta', 1 gamma and 1 omega subunit. When a sigma factor is associated with the core the holoenzyme is formed, which can initiate transcription.

The catalysed reaction is RNA(n) + a ribonucleoside 5'-triphosphate = RNA(n+1) + diphosphate. Its function is as follows. Promotes RNA polymerase assembly. Latches the N- and C-terminal regions of the beta' subunit thereby facilitating its interaction with the beta and alpha subunits. The polypeptide is DNA-directed RNA polymerase subunit omega (Trichormus variabilis (strain ATCC 29413 / PCC 7937) (Anabaena variabilis)).